The primary structure comprises 351 residues: Probable minor fimbrial subunit LpfD (351 aa).

The N-terminal stretch at 1–22 (MKAAIALSLLGCVFGFSGKAFA) is a signal peptide.

It belongs to the fimbrial protein family.

It localises to the fimbrium. Its function is as follows. Part of the lpfABCC'DE fimbrial operon. LP fimbriae may participate in the interaction with eukaryotic cells by assisting in microcolony formation. This is Probable minor fimbrial subunit LpfD (lpfD) from Escherichia coli O157:H7.